A 365-amino-acid polypeptide reads, in one-letter code: Medium chain reductase pydE (365 aa).

Residues 21 to 362 enclose the Enoyl reductase (ER) domain; the sequence is KLIDSLPVPP…SKRARGKVLI (342 aa). Residues 185 to 188, Y226, 274 to 275, and 354 to 355 contribute to the NADP(+) site; these read SGSV, IG, and KR.

The protein belongs to the zinc-containing alcohol dehydrogenase family. In terms of assembly, monomer.

It functions in the pathway mycotoxin biosynthesis. Functionally, medium chain reductase; part of the gene cluster that mediates the biosynthesis of pyrrocidines, fungal natural products containing a macrocyclic para-cyclophane connected to a decahydrofluorene ring system that show potent antibiotic activities toward Gram-negative bacteria. Within the pathway, pydE functions synergistically with pydB, pydX and pydZ to form the cyclophane. The pathway begins with the PKS-NRPS pydA which, with the help of the trans-enoyl reductase pydC, synthesizes the polyketide-tyrosyl acyl thioester product which can be reductively off-loaded by the terminal reductase (R) domain in pydA. The alpha/beta hydrolase pydG is then required to catalyze the subsequent Knoevenagel condensation that affords the 3-pyrrolin-2-one ring, whereas the four proteins pydB, pydE, pydX and pydZ then function synergistically to form the cyclophane. PydB and the membrane-bound pydX and pydZ are lipid-binding proteins that can sequester and mold the pdyG product into the inverse S-shape. Binding of the medium chain reductase pydE to the complex would trigger the cascade oxidative cyclization. PydY is involved in the Diels-Alder cycloaddition that forms the decahydrofluorene core. Additional non-enzymatic hydroxylation yields pyrrocidine A2 which can be further reduced into pyrrocidine B by an endogenous reductase. The protein is Medium chain reductase pydE of Acremonium sp.